We begin with the raw amino-acid sequence, 261 residues long: Proteasome subunit alpha type-4 (261 aa).

Phosphoserine occurs at positions 13 and 75. At Lys-127 the chain carries N6-acetyllysine. Position 173 is a phosphoserine (Ser-173). An N6-acetyllysine modification is found at Lys-176. A disordered region spans residues His-240–Lys-261.

This sequence belongs to the peptidase T1A family. The 26S proteasome consists of a 20S proteasome core and two 19S regulatory subunits. The 20S proteasome core is a barrel-shaped complex made of 28 subunits that are arranged in four stacked rings. The two outer rings are each formed by seven alpha subunits, and the two inner rings are formed by seven beta subunits. The proteolytic activity is exerted by three beta-subunits PSMB5, PSMB6 and PSMB7.

It localises to the cytoplasm. The protein localises to the nucleus. In terms of biological role, component of the 20S core proteasome complex involved in the proteolytic degradation of most intracellular proteins. This complex plays numerous essential roles within the cell by associating with different regulatory particles. Associated with two 19S regulatory particles, forms the 26S proteasome and thus participates in the ATP-dependent degradation of ubiquitinated proteins. The 26S proteasome plays a key role in the maintenance of protein homeostasis by removing misfolded or damaged proteins that could impair cellular functions, and by removing proteins whose functions are no longer required. Associated with the PA200 or PA28, the 20S proteasome mediates ubiquitin-independent protein degradation. This type of proteolysis is required in several pathways including spermatogenesis (20S-PA200 complex) or generation of a subset of MHC class I-presented antigenic peptides (20S-PA28 complex). The chain is Proteasome subunit alpha type-4 (PSMA4) from Bos taurus (Bovine).